We begin with the raw amino-acid sequence, 324 residues long: Rho crystallin (324 aa).

N-acetylthreonine is present on Thr2. Residue 218 to 281 (SVLGSHRDRN…SFTPARIKQN (64 aa)) coordinates NADP(+).

It belongs to the aldo/keto reductase family. Monomer.

This chain is Rho crystallin, found in Rana temporaria (European common frog).